A 43-amino-acid polypeptide reads, in one-letter code: Thymosin beta-12 (43 aa).

Composition is skewed to basic and acidic residues over residues 1 to 25 (MSDK…ETQE) and 33 to 43 (ETIEQEKQATA). Positions 1–43 (MSDKPDLAEVSNFDKTKLKKTETQEKNPLPTKETIEQEKQATA) are disordered. Ser2 carries the N-acetylserine modification.

This sequence belongs to the thymosin beta family.

Its subcellular location is the cytoplasm. It localises to the cytoskeleton. Its function is as follows. Plays an important role in the organization of the cytoskeleton. Binds to and sequesters actin monomers (G actin) and therefore inhibits actin polymerization. The polypeptide is Thymosin beta-12 (Oncorhynchus mykiss (Rainbow trout)).